We begin with the raw amino-acid sequence, 334 residues long: tRNA dimethylallyltransferase (334 aa).

22–29 contributes to the ATP binding site; sequence GPTASGKT. A substrate-binding site is contributed by 24-29; that stretch reads TASGKT.

The protein belongs to the IPP transferase family. As to quaternary structure, monomer. Requires Mg(2+) as cofactor.

It carries out the reaction adenosine(37) in tRNA + dimethylallyl diphosphate = N(6)-dimethylallyladenosine(37) in tRNA + diphosphate. Its function is as follows. Catalyzes the transfer of a dimethylallyl group onto the adenine at position 37 in tRNAs that read codons beginning with uridine, leading to the formation of N6-(dimethylallyl)adenosine (i(6)A). This chain is tRNA dimethylallyltransferase, found in Rhodopirellula baltica (strain DSM 10527 / NCIMB 13988 / SH1).